Reading from the N-terminus, the 331-residue chain is Large ribosomal subunit protein uL3 (331 aa).

The protein belongs to the universal ribosomal protein uL3 family. As to quaternary structure, part of the 50S ribosomal subunit. Forms a cluster with proteins L14 and L24e.

One of the primary rRNA binding proteins, it binds directly near the 3'-end of the 23S rRNA, where it nucleates assembly of the 50S subunit. The chain is Large ribosomal subunit protein uL3 from Archaeoglobus fulgidus (strain ATCC 49558 / DSM 4304 / JCM 9628 / NBRC 100126 / VC-16).